The primary structure comprises 424 residues: Trigger factor (424 aa).

The region spanning 163-248 is the PPIase FKBP-type domain; that stretch reads GDTVVLDFEG…IHEIKAKELP (86 aa).

The protein belongs to the FKBP-type PPIase family. Tig subfamily.

It localises to the cytoplasm. It carries out the reaction [protein]-peptidylproline (omega=180) = [protein]-peptidylproline (omega=0). Functionally, involved in protein export. Acts as a chaperone by maintaining the newly synthesized protein in an open conformation. Functions as a peptidyl-prolyl cis-trans isomerase. The polypeptide is Trigger factor (Bacillus licheniformis (strain ATCC 14580 / DSM 13 / JCM 2505 / CCUG 7422 / NBRC 12200 / NCIMB 9375 / NCTC 10341 / NRRL NRS-1264 / Gibson 46)).